A 597-amino-acid polypeptide reads, in one-letter code: MKHIRNFSIIAHIDHGKSTLSDRLIQVCGGLSEREMAAQVLDSMDIERERGITIKAQSVTLDYKAKDGETYQLNFIDTPGHVDFSYEVSRSLAACEGALLVVDAGQGVEAQTLANCYTAIEMELEVVPILNKIDLPAAEPERVAEEIEEIVGIDAMEATRCSAKTGIGVDDVLENIVTAIPPPEGDPEAPLQALIIDSWFDNYLGVVSLVRIKNGKLKKNDKIKVMSTDQVWGVDRLGIFTPKQIDTTELNTGEVGWVVCGIKDILGAPVGDTLTLAKGGSTERLPGFQKVKPQVYAGLFPVSSDDYENFRDALGKLSLNDASLFYEPESSAALGFGFRCGFLGMLHMEIIQERLEREYDLDLITTAPTVVYEVVKTDKTVLYVDSPAKLPAINDLEEIREPIARCNILVPSDYLGNVITLCVEKRGVQVDMVYHGNQVAVTYDLPMAEVVLDFFDRLKSTSRGYASLDYNFQRYEASNMVRVDVLLNGETVDALAIITHKDIAQSRGRLLVEKMKEFIPRQMFDIAIQAAIGNHIIARSTVKQLRKNVIAKCYGGDISRKKKLLKKQKEGKKRMKQIGNVELPQEAFLAILHVGKD.

In terms of domain architecture, tr-type G spans 2 to 184 (KHIRNFSIIA…NIVTAIPPPE (183 aa)). GTP contacts are provided by residues 14-19 (DHGKST) and 131-134 (NKID).

The protein belongs to the TRAFAC class translation factor GTPase superfamily. Classic translation factor GTPase family. LepA subfamily.

Its subcellular location is the cell inner membrane. It catalyses the reaction GTP + H2O = GDP + phosphate + H(+). Its function is as follows. Required for accurate and efficient protein synthesis under certain stress conditions. May act as a fidelity factor of the translation reaction, by catalyzing a one-codon backward translocation of tRNAs on improperly translocated ribosomes. Back-translocation proceeds from a post-translocation (POST) complex to a pre-translocation (PRE) complex, thus giving elongation factor G a second chance to translocate the tRNAs correctly. Binds to ribosomes in a GTP-dependent manner. This Vibrio atlanticus (strain LGP32) (Vibrio splendidus (strain Mel32)) protein is Elongation factor 4.